The sequence spans 1158 residues: Type IV pilus biogenesis factor PilY1 (1158 aa).

An N-terminal signal peptide occupies residues 1-29; it reads MIHQITRAGKSLLAAGCTLSILFASDSYA. Asp841, Asn843, Asp845, Ile847, and Asp849 together coordinate Ca(2+).

This sequence belongs to the PilY1 family.

The protein localises to the fimbrium. The protein resides in the membrane. Its subcellular location is the cytoplasm. It is found in the cytosol. Involved in pilus assembly, twitching motility and adhesion to host cells. Primes type IV pili (T4P) assembly and is required for inclusion of minor pilins PilV, PilW and PilX to the surface pili. Stabilizes assembled pilus fibers likely by antagonizing retraction mediated by PilT. Calcium-binding and calcium release by PilY1 seem to be essential for twitching motility and for regulation of pilus retraction dynamics of PilT. Regulates surface-activated virulence possibly by acting as a surface-attachment mechanosensor. This is Type IV pilus biogenesis factor PilY1 from Pseudomonas aeruginosa (strain UCBPP-PA14).